Reading from the N-terminus, the 700-residue chain is Polyribonucleotide nucleotidyltransferase (700 aa).

The Mg(2+) site is built by D487 and D493. Residues 554–613 form the KH domain; the sequence is PRLLTIKIHPDKIRDVIGKGGSTIQAITKDTGTQIDIQDDGTIVIASVNNAAAREAKRRI. In terms of domain architecture, S1 motif spans 623-691; that stretch reads GRIYEGKVAK…KQGRIRLSIK (69 aa).

Belongs to the polyribonucleotide nucleotidyltransferase family. In terms of assembly, component of the RNA degradosome, which is a multiprotein complex involved in RNA processing and mRNA degradation. Requires Mg(2+) as cofactor.

It is found in the cytoplasm. The enzyme catalyses RNA(n+1) + phosphate = RNA(n) + a ribonucleoside 5'-diphosphate. Its function is as follows. Involved in mRNA degradation. Catalyzes the phosphorolysis of single-stranded polyribonucleotides processively in the 3'- to 5'-direction. The polypeptide is Polyribonucleotide nucleotidyltransferase (Xylella fastidiosa (strain M12)).